The primary structure comprises 185 residues: Ribosome-recycling factor (185 aa).

It belongs to the RRF family.

It localises to the cytoplasm. Functionally, responsible for the release of ribosomes from messenger RNA at the termination of protein biosynthesis. May increase the efficiency of translation by recycling ribosomes from one round of translation to another. The sequence is that of Ribosome-recycling factor from Baumannia cicadellinicola subsp. Homalodisca coagulata.